A 439-amino-acid polypeptide reads, in one-letter code: MTNMSWSFLTRLLEEIHNHSTFVGKVWLTVLVVFRIVLTAVGGEAIYSDEQAKFTCNTRQPGCDNVCYDAFAPLSHVRFWVFQIVVISTPSVMYLGYAVHRLARASEQERRRALRRRPGPRRAPRAHLPPPHAGWPEPADLGEEEPMLGLGEEEEEEETGAAEGAGEEAEEAGAEEACTKAVGADGKAAGTPGPTGQHDGRRRIQREGLMRVYVAQLVARAAFEVAFLVGQYLLYGFEVRPFFPCSRQPCPHVVDCFVSRPTEKTVFLLVMYVVSCLCLLLNLCEMAHLGLGSAQDAVRGRRGPPASAPAPAPRPPPCAFPAAAAGLACPPDYSLVVRAAERARAHDQNLANLALQALRDGAAAGDRDRDSSPCVGLPAASRGPPRAGAPASRTGSATSAGTVGEQGRPGTHERPGAKPRAGSEKGSASSRDGKTTVWI.

The Cytoplasmic segment spans residues 1-25; it reads MTNMSWSFLTRLLEEIHNHSTFVGK. A helical transmembrane segment spans residues 26–46; the sequence is VWLTVLVVFRIVLTAVGGEAI. Residues 47–78 lie on the Extracellular side of the membrane; that stretch reads YSDEQAKFTCNTRQPGCDNVCYDAFAPLSHVR. A helical transmembrane segment spans residues 79–99; the sequence is FWVFQIVVISTPSVMYLGYAV. At 100–216 the chain is on the cytoplasmic side; the sequence is HRLARASEQE…EGLMRVYVAQ (117 aa). Residues 108–178 are disordered; sequence QERRRALRRR…AEEAGAEEAC (71 aa). Over residues 112–125 the composition is skewed to basic residues; sequence RALRRRPGPRRAPR. A compositionally biased stretch (acidic residues) spans 140 to 174; it reads DLGEEEPMLGLGEEEEEEETGAAEGAGEEAEEAGA. Residues 217 to 237 traverse the membrane as a helical segment; that stretch reads LVARAAFEVAFLVGQYLLYGF. Topologically, residues 238–265 are extracellular; sequence EVRPFFPCSRQPCPHVVDCFVSRPTEKT. A helical membrane pass occupies residues 266-286; sequence VFLLVMYVVSCLCLLLNLCEM. The Cytoplasmic segment spans residues 287 to 439; it reads AHLGLGSAQD…SRDGKTTVWI (153 aa). The interval 364-439 is disordered; the sequence is AGDRDRDSSP…SRDGKTTVWI (76 aa). At S371 the chain carries Phosphoserine. Positions 378-393 are enriched in low complexity; that stretch reads PAASRGPPRAGAPASR.

This sequence belongs to the connexin family. Gamma-type subfamily. As to quaternary structure, a connexon is composed of a hexamer of connexins. Interacts with TJP1. Expressed in central nervous system, in sciatic nerve and sural nerve. Also detected in skeletal muscles.

The protein resides in the cell membrane. It is found in the cell junction. It localises to the gap junction. In terms of biological role, one gap junction consists of a cluster of closely packed pairs of transmembrane channels, the connexons, through which materials of low MW diffuse from one cell to a neighboring cell. May play a role in myelination in central and peripheral nervous systems. In Homo sapiens (Human), this protein is Gap junction gamma-2 protein (GJC2).